The following is a 315-amino-acid chain: Probable cytochrome c oxidase subunit 2 (315 aa).

The 48-residue stretch at 6–53 folds into the RPE1 insert domain; that stretch reads RHLSKPAYREEFKGDTSPRTAAYISNRADASLGSTYKLPLEAKFWKMS. Transmembrane regions (helical) follow at residues 41-61, 96-116, and 133-153; these read YKLP…CFLI, LLYI…FVCI, and VLIE…IAVP. Cu cation is bound by residues histidine 235, cysteine 270, cysteine 274, and histidine 278.

Belongs to the cytochrome c oxidase subunit 2 family. Cu cation serves as cofactor. It depends on heme as a cofactor.

It localises to the cell membrane. It catalyses the reaction 4 Fe(II)-[cytochrome c] + O2 + 8 H(+)(in) = 4 Fe(III)-[cytochrome c] + 2 H2O + 4 H(+)(out). Functionally, subunits I and II form the functional core of the enzyme complex. Electrons originating in cytochrome c are transferred via heme a and Cu(A) to the binuclear center formed by heme a3 and Cu(B). The sequence is that of Probable cytochrome c oxidase subunit 2 (ctaC) from Rickettsia felis (strain ATCC VR-1525 / URRWXCal2) (Rickettsia azadi).